The sequence spans 48 residues: ATP synthase protein 8 (48 aa).

Residues 12-32 (QLTYGLLLITVLLILFSQFFL) traverse the membrane as a helical segment.

It belongs to the ATPase protein 8 family. In terms of assembly, F-type ATPases have 2 components, CF(1) - the catalytic core - and CF(0) - the membrane proton channel.

It localises to the mitochondrion membrane. Its function is as follows. Mitochondrial membrane ATP synthase (F(1)F(0) ATP synthase or Complex V) produces ATP from ADP in the presence of a proton gradient across the membrane which is generated by electron transport complexes of the respiratory chain. F-type ATPases consist of two structural domains, F(1) - containing the extramembraneous catalytic core and F(0) - containing the membrane proton channel, linked together by a central stalk and a peripheral stalk. During catalysis, ATP synthesis in the catalytic domain of F(1) is coupled via a rotary mechanism of the central stalk subunits to proton translocation. Part of the complex F(0) domain. Minor subunit located with subunit a in the membrane. This is ATP synthase protein 8 (ATP8) from Candida glabrata (strain ATCC 2001 / BCRC 20586 / JCM 3761 / NBRC 0622 / NRRL Y-65 / CBS 138) (Yeast).